Here is a 446-residue protein sequence, read N- to C-terminus: Alkylglycerol monooxygenase (446 aa).

A run of 2 helical transmembrane segments spans residues 43 to 63 (ATVY…AWKG) and 110 to 130 (WDSP…YYWF). One can recognise a Fatty acid hydroxylase domain in the interval 118 to 248 (LTFLGVDFGY…LIIWDRMFGT (131 aa)). The Histidine box-1 motif lies at 131–135 (HRMAH). The Histidine box-2 motif lies at 144–148 (HQTHH). The chain crosses the membrane as a helical span at residues 167-187 (YFSWMFYWPMAFCIPPSVFAV). Residues 220–224 (HRVHH) carry the Histidine box-3 motif. 3 consecutive transmembrane segments (helical) span residues 339 to 359 (MMHF…KLIL), 362 to 382 (ATLL…GFIF), and 412 to 434 (VPYL…GLKA).

The protein belongs to the sterol desaturase family. TMEM195 subfamily. Fe cation is required as a cofactor.

The protein resides in the endoplasmic reticulum membrane. The enzyme catalyses 1-O-(1,2-saturated-alkyl)-sn-glycerol + (6R)-L-erythro-5,6,7,8-tetrahydrobiopterin + O2 = a 1-(1-hydroxyalkyl)-sn-glycerol + (6R)-L-erythro-6,7-dihydrobiopterin + H2O. In terms of biological role, glyceryl-ether monooxygenase that cleaves the O-alkyl bond of ether lipids. Ether lipids are essential components of brain membranes. The polypeptide is Alkylglycerol monooxygenase (agmo) (Xenopus tropicalis (Western clawed frog)).